The chain runs to 326 residues: o-succinylbenzoate synthase (326 aa).

Lysine 110 (proton donor) is an active-site residue. Positions 138, 165, and 188 each coordinate Mg(2+). The active-site Proton acceptor is lysine 212.

Belongs to the mandelate racemase/muconate lactonizing enzyme family. MenC type 1 subfamily. A divalent metal cation is required as a cofactor.

It catalyses the reaction (1R,6R)-6-hydroxy-2-succinyl-cyclohexa-2,4-diene-1-carboxylate = 2-succinylbenzoate + H2O. It participates in quinol/quinone metabolism; 1,4-dihydroxy-2-naphthoate biosynthesis; 1,4-dihydroxy-2-naphthoate from chorismate: step 4/7. It functions in the pathway quinol/quinone metabolism; menaquinone biosynthesis. In terms of biological role, converts 2-succinyl-6-hydroxy-2,4-cyclohexadiene-1-carboxylate (SHCHC) to 2-succinylbenzoate (OSB). The polypeptide is o-succinylbenzoate synthase (Mycobacterium bovis (strain ATCC BAA-935 / AF2122/97)).